The sequence spans 211 residues: Probable transcription repressor protein RGM1 (211 aa).

Positions 6–11 (PKRNKD) match the Nuclear localization signal motif. 2 C2H2-type zinc fingers span residues 19-44 (YRCVGYPDCNMSFNRTEHLARHIRKH) and 50-73 (FQCNICLKFFSRIDNLRQHQSSVH). The interval 178–211 (NIVELPPDSSDTPASPSKVQSFDQAKDASPNAKK) is disordered. The segment covering 183–194 (PPDSSDTPASPS) has biased composition (low complexity).

Its subcellular location is the nucleus. The chain is Probable transcription repressor protein RGM1 (RGM1) from Saccharomyces cerevisiae (strain ATCC 204508 / S288c) (Baker's yeast).